A 162-amino-acid chain; its full sequence is 2-C-methyl-D-erythritol 2,4-cyclodiphosphate synthase (162 aa).

2 residues coordinate a divalent metal cation: Asp-12 and His-14. Residues 12 to 14 and 38 to 39 contribute to the 4-CDP-2-C-methyl-D-erythritol 2-phosphate site; these read DVH and HS. His-46 is a binding site for a divalent metal cation. 4-CDP-2-C-methyl-D-erythritol 2-phosphate is bound by residues 60–62, 65–69, Phe-143, and Arg-146; these read DIG and FPDTD.

Belongs to the IspF family. As to quaternary structure, homotrimer. A divalent metal cation is required as a cofactor.

The catalysed reaction is 4-CDP-2-C-methyl-D-erythritol 2-phosphate = 2-C-methyl-D-erythritol 2,4-cyclic diphosphate + CMP. Its pathway is isoprenoid biosynthesis; isopentenyl diphosphate biosynthesis via DXP pathway; isopentenyl diphosphate from 1-deoxy-D-xylulose 5-phosphate: step 4/6. Functionally, involved in the biosynthesis of isopentenyl diphosphate (IPP) and dimethylallyl diphosphate (DMAPP), two major building blocks of isoprenoid compounds. Catalyzes the conversion of 4-diphosphocytidyl-2-C-methyl-D-erythritol 2-phosphate (CDP-ME2P) to 2-C-methyl-D-erythritol 2,4-cyclodiphosphate (ME-CPP) with a corresponding release of cytidine 5-monophosphate (CMP). This is 2-C-methyl-D-erythritol 2,4-cyclodiphosphate synthase from Azoarcus sp. (strain BH72).